A 132-amino-acid polypeptide reads, in one-letter code: Protein LH2 (132 aa).

This is Protein LH2 from Pantherophis guttatus (Corn snake).